Reading from the N-terminus, the 290-residue chain is ATP synthase gamma chain (290 aa).

This sequence belongs to the ATPase gamma chain family. In terms of assembly, F-type ATPases have 2 components, CF(1) - the catalytic core - and CF(0) - the membrane proton channel. CF(1) has five subunits: alpha(3), beta(3), gamma(1), delta(1), epsilon(1). CF(0) has three main subunits: a, b and c.

The protein resides in the cell inner membrane. Functionally, produces ATP from ADP in the presence of a proton gradient across the membrane. The gamma chain is believed to be important in regulating ATPase activity and the flow of protons through the CF(0) complex. The protein is ATP synthase gamma chain of Anaeromyxobacter sp. (strain Fw109-5).